Reading from the N-terminus, the 292-residue chain is Ribosomal protein L11 methyltransferase (292 aa).

S-adenosyl-L-methionine is bound by residues Thr-145, Gly-166, Asp-188, and Asn-229.

This sequence belongs to the methyltransferase superfamily. PrmA family.

The protein localises to the cytoplasm. It carries out the reaction L-lysyl-[protein] + 3 S-adenosyl-L-methionine = N(6),N(6),N(6)-trimethyl-L-lysyl-[protein] + 3 S-adenosyl-L-homocysteine + 3 H(+). Functionally, methylates ribosomal protein L11. The protein is Ribosomal protein L11 methyltransferase of Nitrosococcus oceani (strain ATCC 19707 / BCRC 17464 / JCM 30415 / NCIMB 11848 / C-107).